The following is a 690-amino-acid chain: Calpain-9 (690 aa).

The disordered stretch occupies residues 1 to 23; sequence MPYLHRSLRPQPQPVPGDARTIH. The Calpain catalytic domain occupies 42-337; that stretch reads LFEDADFPAS…FDKVEICNLT (296 aa). Residues L81, G83, and D88 each coordinate Ca(2+). The active site involves C97. E167 contacts Ca(2+). Residues H254 and N278 contribute to the active site. Residues E284, D291, L312, D314, and E316 each contribute to the Ca(2+) site. The segment at 338–521 is domain III; it reads PDALEDSALH…PQEEETEEEQ (184 aa). EF-hand domains follow at residues 518–552, 561–589, and 591–626; these read EEEQ…VLQK, LSLL…FRVF, and DKLK…AGFQ. Residues 522–690 form a domain IV region; sequence QFRALFQRVA…NEFISLTMNI (169 aa). D574, S576, N578, K580, E585, D604, D606, S608, T610, and E615 together coordinate Ca(2+).

It belongs to the peptidase C2 family. Predominantly expressed in stomach and small intestine, although low levels of expression in other organs.

It localises to the cytoplasm. In terms of biological role, calcium-regulated non-lysosomal thiol-protease. In Mus musculus (Mouse), this protein is Calpain-9 (Capn9).